Here is a 227-residue protein sequence, read N- to C-terminus: Probable septum site-determining protein MinC (227 aa).

Belongs to the MinC family. In terms of assembly, interacts with MinD and FtsZ.

Its function is as follows. Cell division inhibitor that blocks the formation of polar Z ring septums. Rapidly oscillates between the poles of the cell to destabilize FtsZ filaments that have formed before they mature into polar Z rings. Prevents FtsZ polymerization. This chain is Probable septum site-determining protein MinC, found in Photorhabdus laumondii subsp. laumondii (strain DSM 15139 / CIP 105565 / TT01) (Photorhabdus luminescens subsp. laumondii).